Consider the following 467-residue polypeptide: Ribulose bisphosphate carboxylase large chain (467 aa).

Substrate-binding residues include Xaa-106 and Thr-156. Lys-158 (proton acceptor) is an active-site residue. Position 160 (Lys-160) interacts with substrate. Positions 184, 186, and 187 each coordinate Mg(2+). At Lys-184 the chain carries N6-carboxylysine. His-276 (proton acceptor) is an active-site residue. Positions 277, 309, and 361 each coordinate substrate.

Belongs to the RuBisCO large chain family. Type I subfamily. In terms of assembly, heterohexadecamer of 8 large chains and 8 small chains. Mg(2+) is required as a cofactor.

It is found in the plastid. The protein localises to the chloroplast. The enzyme catalyses 2 (2R)-3-phosphoglycerate + 2 H(+) = D-ribulose 1,5-bisphosphate + CO2 + H2O. It carries out the reaction D-ribulose 1,5-bisphosphate + O2 = 2-phosphoglycolate + (2R)-3-phosphoglycerate + 2 H(+). RuBisCO catalyzes two reactions: the carboxylation of D-ribulose 1,5-bisphosphate, the primary event in carbon dioxide fixation, as well as the oxidative fragmentation of the pentose substrate in the photorespiration process. Both reactions occur simultaneously and in competition at the same active site. The polypeptide is Ribulose bisphosphate carboxylase large chain (rbcL) (Chondrus crispus (Carrageen Irish moss)).